The sequence spans 145 residues: Basic phospholipase A2 BFPA (145 aa).

An N-terminal signal peptide occupies residues 1–27 (MNPAHLLVLLAVCVSLLGAANIPPQSL). Intrachain disulfides connect cysteine 38–cysteine 97, cysteine 52–cysteine 144, cysteine 54–cysteine 70, cysteine 69–cysteine 125, cysteine 76–cysteine 118, cysteine 86–cysteine 111, and cysteine 104–cysteine 116. Ca(2+) is bound by residues tyrosine 53, glycine 55, and glycine 57. The active site involves histidine 73. Aspartate 74 lines the Ca(2+) pocket. The active site involves aspartate 119.

The protein belongs to the phospholipase A2 family. Group I subfamily. D49 sub-subfamily. As to quaternary structure, homodimer; disulfide-linked. It depends on Ca(2+) as a cofactor. In terms of tissue distribution, expressed by the venom gland.

The protein resides in the secreted. It carries out the reaction a 1,2-diacyl-sn-glycero-3-phosphocholine + H2O = a 1-acyl-sn-glycero-3-phosphocholine + a fatty acid + H(+). Functionally, snake venom phospholipase A2 (PLA2) that inhibits blood coagulation and shows bactericidal activities against both Gram-negative and -positive bacteria (E.coli, MIC=0.4 uM and S.aureus, MIC=0.1 uM). PLA2 catalyzes the calcium-dependent hydrolysis of the 2-acyl groups in 3-sn-phosphoglycerides. This Bungarus fasciatus (Banded krait) protein is Basic phospholipase A2 BFPA.